Reading from the N-terminus, the 210-residue chain is Prolactin (210 aa).

Positions 1–23 (MTQGSRLYFAVAVLMCGFVSING) are cleaved as a signal peptide. 2 cysteine pairs are disulfide-bonded: Cys-69–Cys-183 and Cys-200–Cys-210.

This sequence belongs to the somatotropin/prolactin family. As to expression, pituitary gland.

Its subcellular location is the secreted. In Carassius auratus (Goldfish), this protein is Prolactin (prl1).